The sequence spans 456 residues: DEAD-box ATP-dependent RNA helicase 10 (456 aa).

The short motif at 9-37 (KTFAELGVREELVKACERLGWKNPSKIQA) is the Q motif element. The Helicase ATP-binding domain maps to 40–223 (LPFALEGKDV…RACLRNPVKI (184 aa)). 53 to 60 (AQTGSGKT) is an ATP binding site. The DEAD box signature appears at 171–174 (DEAD). A Helicase C-terminal domain is found at 250–394 (YLVYILSEMP…EYPAEEDEVL (145 aa)). The segment at 407 to 456 (SAMNMKESGGRKRRGEDDEESERFLGGNKDRGNKERGGNKDKKSSKKFKR) is disordered. The segment covering 434–448 (NKDRGNKERGGNKDK) has biased composition (basic and acidic residues).

This sequence belongs to the DEAD box helicase family. DDX47/RRP3 subfamily. As to expression, expressed in all tissues and organs examined including root, cotyledon, first and second leaves, third and fourth leaves, fifth and sixth leaves, shoot apex, flower, flower bud, cauline leaf and rosette leaves.

The protein localises to the nucleus. It is found in the nucleolus. The catalysed reaction is ATP + H2O = ADP + phosphate + H(+). Its function is as follows. Involved in leaf polarity establishment by functioning cooperatively with AS2 to repress abaxial genes ARF3, ARF4, KAN1, KAN2, YAB1 and YAB5, and the knox homeobox genes KNAT1, KNAT2, KNAT6, and STM to promote adaxial development in leaf primordia at shoot apical meristems at high temperatures. Involved in the processing of pre-rRNA intermediates at high temperatures. In Arabidopsis thaliana (Mouse-ear cress), this protein is DEAD-box ATP-dependent RNA helicase 10 (RH10).